The sequence spans 415 residues: Probable G-protein coupled receptor 19 (415 aa).

Residues 1 to 69 (MVFAHRMDNS…LKPGEVATAS (69 aa)) lie on the Extracellular side of the membrane. N-linked (GlcNAc...) asparagine glycosylation is found at N25 and N52. Residues 70-90 (IFFGILWLFSIFGNSLVCLVI) traverse the membrane as a helical segment. Residues 91 to 102 (HRSRRTQSTTNY) are Cytoplasmic-facing. The chain crosses the membrane as a helical span at residues 103-123 (FVVSMACADLLISVASTPFVL). Over 124-143 (LQFTTGRWTLGSATCKVVRY) the chain is Extracellular. C138 and C210 form a disulfide bridge. The helical transmembrane segment at 144–161 (FQYLTPGVQIYVLLSICI) threads the bilayer. Residues 162 to 182 (DRFYTIVYPLSFKVSREKAKK) lie on the Cytoplasmic side of the membrane. A helical transmembrane segment spans residues 183–203 (MIAASWVFDAGFVTPVLFFYG). At 204-221 (SNWDSHCNYFLPSSWEGT) the chain is on the extracellular side. A helical membrane pass occupies residues 222 to 242 (AYTVIHFLVGFVIPSVLIILF). The Cytoplasmic portion of the chain corresponds to 243-277 (YQKVIKYIWRIGTDGRTVRRTMNIVPRTKVKTIKM). A helical transmembrane segment spans residues 278 to 298 (FLILNLLFLLSWLPFHVAQLW). Residues 299 to 309 (HPHEQDYKKSS) lie on the Extracellular side of the membrane. A helical transmembrane segment spans residues 310–325 (LVFTAITWISFSSSAS). Residues 326-415 (KPTLYSIYNA…INSNPPNTFV (90 aa)) are Cytoplasmic-facing.

This sequence belongs to the G-protein coupled receptor 1 family. As to expression, abundant expression in the brain.

Its subcellular location is the cell membrane. Functionally, G-protein coupled receptor that plays a role in the regulation of circadian rhythms and energy metabolism. Participates in maintaining proper circadian gene expression in the suprachiasmatic nucleus (SCN), the locus of the master circadian clock in the brain. May function as a coordinator of aging-associated metabolic dysfunction, stress response, DNA integrity management, and eventual senescence. Upon binding to adropin, modulates mitochondrial energy metabolism via the p44/42-PDK4 signaling pathway, influencing pyruvate dehydrogenase activity. This is Probable G-protein coupled receptor 19 (GPR19) from Homo sapiens (Human).